The chain runs to 445 residues: RCC1 domain-containing protein RUG3, mitochondrial (445 aa).

Residues 1–22 (MAALSHRLRSFTRRFSSTRTTQ) constitute a mitochondrion transit peptide. RCC1 repeat units lie at residues 47–101 (TLQL…DSSS), 118–169 (DGDL…ALTH), 171–221 (GDVF…AITE), 222–279 (SGEL…ALTK), 280–331 (EGQL…ALTE), 333–383 (GKVL…AITD), and 385–442 (GELW…CLVS).

In terms of assembly, interacts with ATM. Mostly expressed in roots and rosette leaves of young seedlings, and, to a lower extent, in the flowers and siliques of mature plants. Preferentially expressed in the vascular tissues.

It localises to the mitochondrion. Functionally, regulates DNA damage response (DDR) synergistically with ATM. Together with ATM, involved in the splicing of the ND2/NAD2 mRNA. Required for the accumulation of mitochondrial respiratory chain complex I. Negative regulator of plant responses to abscisic acid (ABA). May have a pivotal role in vegetative growth and the phase transition from vegetative to reproductive growth. In Arabidopsis thaliana (Mouse-ear cress), this protein is RCC1 domain-containing protein RUG3, mitochondrial.